The chain runs to 177 residues: PLAC8-like protein 1 (177 aa).

It belongs to the cornifelin family.

This chain is PLAC8-like protein 1 (PLAC8L1), found in Homo sapiens (Human).